Consider the following 480-residue polypeptide: Sulfate adenylyltransferase subunit 1 (480 aa).

The tr-type G domain maps to 30–248 (KGLLRFLTCG…TVDVKKEASK (219 aa)). The interval 39 to 46 (GSVDDGKS) is G1. A GTP-binding site is contributed by 39–46 (GSVDDGKS). A G2 region spans residues 97–101 (GITID). The tract at residues 118 to 121 (DTPG) is G3. GTP contacts are provided by residues 118–122 (DTPGH) and 173–176 (NKMD). The G4 stretch occupies residues 173–176 (NKMD). Residues 211–213 (SAL) form a G5 region.

It belongs to the TRAFAC class translation factor GTPase superfamily. Classic translation factor GTPase family. CysN/NodQ subfamily. In terms of assembly, heterodimer composed of CysD, the smaller subunit, and CysN.

The catalysed reaction is sulfate + ATP + H(+) = adenosine 5'-phosphosulfate + diphosphate. Its pathway is sulfur metabolism; hydrogen sulfide biosynthesis; sulfite from sulfate: step 1/3. Functionally, with CysD forms the ATP sulfurylase (ATPS) that catalyzes the adenylation of sulfate producing adenosine 5'-phosphosulfate (APS) and diphosphate, the first enzymatic step in sulfur assimilation pathway. APS synthesis involves the formation of a high-energy phosphoric-sulfuric acid anhydride bond driven by GTP hydrolysis by CysN coupled to ATP hydrolysis by CysD. This Photorhabdus laumondii subsp. laumondii (strain DSM 15139 / CIP 105565 / TT01) (Photorhabdus luminescens subsp. laumondii) protein is Sulfate adenylyltransferase subunit 1.